The primary structure comprises 516 residues: Flavonoid-6-hydroxylase (516 aa).

The helical transmembrane segment at phenylalanine 3–tryptophan 23 threads the bilayer. Cysteine 455 serves as a coordination point for heme.

It belongs to the cytochrome P450 family. Requires heme as cofactor.

The protein resides in the membrane. The enzyme catalyses genkwanin + reduced [NADPH--hemoprotein reductase] + O2 = scutellarein 7-methyl ether + oxidized [NADPH--hemoprotein reductase] + H2O. It carries out the reaction (2S)-sakuranetin + reduced [NADPH--hemoprotein reductase] + O2 = (2S)-7-methylcarthamidin + oxidized [NADPH--hemoprotein reductase] + H2O + H(+). It catalyses the reaction apigenin 4',7-dimethyl ether + reduced [NADPH--hemoprotein reductase] + O2 = ladanein + oxidized [NADPH--hemoprotein reductase] + H2O + H(+). The catalysed reaction is (2S)-naringenin 4',7-dimethyl ether + reduced [NADPH--hemoprotein reductase] + O2 = (2S)-carthamidin-4',7-dimethyl ether + oxidized [NADPH--hemoprotein reductase] + H2O + H(+). It functions in the pathway flavonoid metabolism. 6-OH hydroxylase involved in the biosynthesis of polymethoxylated flavonoids natural products such as pebrellin, aroma compounds which contribute to the flavor of peppermint, and exhibit pharmacological activities such as anti-allergic, anti-oxidant, antibacterial, anti-proliferative, and anti-inflammatory effects. Catalyzes the 6-hydroxylation of 7-O-methylated precursors such as the conversion of genkwanin (GENK) to scutellarein-7-methyl ether (SCU7Me). Can also use apigenin-7,4'-dimethyl ether (AdM), naringenin-7-methyl ether (SAK) and naringenin-7,4'-dimethyl ether (NdM) as substrates. In Mentha piperita (Peppermint), this protein is Flavonoid-6-hydroxylase.